A 331-amino-acid chain; its full sequence is tRNA (guanine-N(1)-)-methyltransferase (331 aa).

2 stretches are compositionally biased toward low complexity: residues 77–99 and 107–134; these read GSDT…QATR and AQPG…GRAA. The disordered stretch occupies residues 77–137; that stretch reads GSDTTARSGS…PGAGRAASSR (61 aa). S-adenosyl-L-methionine contacts are provided by residues G169 and 193 to 198; that span reads LGDYVL. Residues 312–331 form a disordered region; the sequence is WQRCSPAPSEQAPEGARDMA.

This sequence belongs to the RNA methyltransferase TrmD family. Homodimer.

The protein resides in the cytoplasm. The enzyme catalyses guanosine(37) in tRNA + S-adenosyl-L-methionine = N(1)-methylguanosine(37) in tRNA + S-adenosyl-L-homocysteine + H(+). In terms of biological role, specifically methylates guanosine-37 in various tRNAs. This Kocuria rhizophila (strain ATCC 9341 / DSM 348 / NBRC 103217 / DC2201) protein is tRNA (guanine-N(1)-)-methyltransferase.